Here is a 108-residue protein sequence, read N- to C-terminus: UPF0060 membrane protein Sca_1835 (108 aa).

The next 4 membrane-spanning stretches (helical) occupy residues isoleucine 5–tryptophan 25, phenylalanine 34–phenylalanine 54, valine 60–aspartate 80, and proline 84–leucine 104.

It belongs to the UPF0060 family.

The protein resides in the cell membrane. In Staphylococcus carnosus (strain TM300), this protein is UPF0060 membrane protein Sca_1835.